The sequence spans 187 residues: Putative AgrB-like protein 1 (187 aa).

5 consecutive transmembrane segments (helical) span residues 29–49, 50–70, 81–98, 103–120, and 149–169; these read VVIV…IAGI, LGYF…KPFI, CFIA…LVTF, LFSI…IYNK, and ILFL…TITW.

The protein belongs to the AgrB family.

The protein localises to the cell membrane. In terms of biological role, may be involved in the proteolytic processing of a quorum sensing system signal molecule precursor. In Clostridium perfringens (strain 13 / Type A), this protein is Putative AgrB-like protein 1.